A 129-amino-acid chain; its full sequence is UPF0225 protein XC_4246 (129 aa).

The protein belongs to the UPF0225 family.

The polypeptide is UPF0225 protein XC_4246 (Xanthomonas campestris pv. campestris (strain 8004)).